We begin with the raw amino-acid sequence, 599 residues long: Probable acetolactate synthase large subunit (599 aa).

Glutamate 47 is a binding site for thiamine diphosphate. Residues arginine 149, 258–279 (HGTKPANYCLSESDVLISIGCR), and 301–320 (DIDPAEIGKNVNVDVPIVGD) contribute to the FAD site. The tract at residues 404-484 (QNQMWMAHYF…VVICIFDNRT (81 aa)) is thiamine pyrophosphate binding. Positions 455 and 482 each coordinate Mg(2+).

This sequence belongs to the TPP enzyme family. As to quaternary structure, dimer of large and small chains. Requires Mg(2+) as cofactor. The cofactor is thiamine diphosphate.

It catalyses the reaction 2 pyruvate + H(+) = (2S)-2-acetolactate + CO2. Its pathway is amino-acid biosynthesis; L-isoleucine biosynthesis; L-isoleucine from 2-oxobutanoate: step 1/4. It participates in amino-acid biosynthesis; L-valine biosynthesis; L-valine from pyruvate: step 1/4. This is Probable acetolactate synthase large subunit (ilvB) from Methanococcus aeolicus.